The sequence spans 151 residues: NADPH-dependent 7-cyano-7-deazaguanine reductase (151 aa).

The active-site Thioimide intermediate is C51. The active-site Proton donor is D58. Substrate is bound by residues 73–75 and 92–93; these read VES and HE.

The protein belongs to the GTP cyclohydrolase I family. QueF type 1 subfamily.

The protein localises to the cytoplasm. It carries out the reaction 7-aminomethyl-7-carbaguanine + 2 NADP(+) = 7-cyano-7-deazaguanine + 2 NADPH + 3 H(+). It functions in the pathway tRNA modification; tRNA-queuosine biosynthesis. Its function is as follows. Catalyzes the NADPH-dependent reduction of 7-cyano-7-deazaguanine (preQ0) to 7-aminomethyl-7-deazaguanine (preQ1). The chain is NADPH-dependent 7-cyano-7-deazaguanine reductase from Bacteroides fragilis (strain YCH46).